Consider the following 97-residue polypeptide: DNA replication protein 1 (97 aa).

Residues 49 to 78 (IELEKKMTKLEHENKLMKNALYELSRMENN) adopt a coiled-coil conformation.

It belongs to the phi29likevirus DNA replication protein 1 family. In terms of assembly, homomultimer. Self-associates into large complexes forming long filamentous structures. Interacts (via N-terminus) with the primer terminal protein.

The protein resides in the host membrane. Functionally, protein that assembles into highly ordered structures and provides a specific site for viral DNA replication. Probably anchors the viral DNA replisome to the host membrane. The polypeptide is DNA replication protein 1 (1C) (Bacillus subtilis (Bacteriophage PZA)).